Consider the following 107-residue polypeptide: Multidrug resistance protein mmr (107 aa).

4 helical membrane passes run 2-19 (AYLF…ATTL), 29-51 (LVPT…LSIS), 58-77 (VAYA…IAVL), and 82-104 (PVSV…LNLA).

It belongs to the drug/metabolite transporter (DMT) superfamily. Small multidrug resistance (SMR) (TC 2.A.7.1) family. Mmr subfamily.

It localises to the cell membrane. Functionally, multidrug efflux pump. Confers resistance to tetraphenylphosphonium (TPP), erythromycin, ethidium bromide, acriflavine, safranin O and pyronin Y. The chain is Multidrug resistance protein mmr (mmr) from Mycobacterium leprae (strain TN).